Consider the following 181-residue polypeptide: D-lyxose/D-mannose isomerase (181 aa).

Residues His-75, His-77, Glu-88, and His-143 each coordinate Mn(2+).

The protein belongs to the D-lyxose ketol-isomerase family. Homodimer. The cofactor is Mn(2+).

It carries out the reaction D-lyxose = D-xylulose. The catalysed reaction is D-mannose = D-fructose. In terms of biological role, sugar isomerase that catalyzes the reversible isomerization of D-lyxose to D-xylulose, and D-mannose to D-fructose. Shows optimum activity using D-lyxose as substrate, but can also effectively catalyze the isomerization between D-fructose and D-mannose. This is D-lyxose/D-mannose isomerase from Thermosediminibacter oceani (strain ATCC BAA-1034 / DSM 16646 / JW/IW-1228P).